Consider the following 335-residue polypeptide: Succinylglutamate desuccinylase (335 aa).

His-59, Glu-62, and His-151 together coordinate Zn(2+). The active site involves Glu-215.

Belongs to the AspA/AstE family. Succinylglutamate desuccinylase subfamily. Zn(2+) is required as a cofactor.

It catalyses the reaction N-succinyl-L-glutamate + H2O = L-glutamate + succinate. The protein operates within amino-acid degradation; L-arginine degradation via AST pathway; L-glutamate and succinate from L-arginine: step 5/5. Functionally, transforms N(2)-succinylglutamate into succinate and glutamate. This is Succinylglutamate desuccinylase from Pseudomonas putida (strain GB-1).